The sequence spans 63 residues: Cytochrome c oxidase subunit 7C, mitochondrial (63 aa).

The N-terminal 16 residues, 1–16 (MLGQSIRRFTTSVVRR), are a transit peptide targeting the mitochondrion. Topologically, residues 17–33 (SHYEEGPGKNLPFSVEN) are mitochondrial matrix. N6-acetyllysine; alternate is present on Lys25. Lys25 is subject to N6-succinyllysine; alternate. A helical membrane pass occupies residues 34 to 60 (KWSLLAKMCLYFGSAFATPFLVVRHQL). The Mitochondrial intermembrane portion of the chain corresponds to 61-63 (LKT).

This sequence belongs to the cytochrome c oxidase VIIc family. In terms of assembly, component of the cytochrome c oxidase (complex IV, CIV), a multisubunit enzyme composed of 14 subunits. The complex is composed of a catalytic core of 3 subunits MT-CO1, MT-CO2 and MT-CO3, encoded in the mitochondrial DNA, and 11 supernumerary subunits COX4I1 (or COX4I2), COX5A, COX5B, COX6A1 (or COX6A2), COX6B1 (or COX6B2), COX6C, COX7A2 (or COX7A1), COX7B, COX7C, COX8A and NDUFA4, which are encoded in the nuclear genome. The complex exists as a monomer or a dimer and forms supercomplexes (SCs) in the inner mitochondrial membrane with NADH-ubiquinone oxidoreductase (complex I, CI) and ubiquinol-cytochrome c oxidoreductase (cytochrome b-c1 complex, complex III, CIII), resulting in different assemblies (supercomplex SCI(1)III(2)IV(1) and megacomplex MCI(2)III(2)IV(2)). Interacts with RAB5IF.

It is found in the mitochondrion inner membrane. It participates in energy metabolism; oxidative phosphorylation. In terms of biological role, component of the cytochrome c oxidase, the last enzyme in the mitochondrial electron transport chain which drives oxidative phosphorylation. The respiratory chain contains 3 multisubunit complexes succinate dehydrogenase (complex II, CII), ubiquinol-cytochrome c oxidoreductase (cytochrome b-c1 complex, complex III, CIII) and cytochrome c oxidase (complex IV, CIV), that cooperate to transfer electrons derived from NADH and succinate to molecular oxygen, creating an electrochemical gradient over the inner membrane that drives transmembrane transport and the ATP synthase. Cytochrome c oxidase is the component of the respiratory chain that catalyzes the reduction of oxygen to water. Electrons originating from reduced cytochrome c in the intermembrane space (IMS) are transferred via the dinuclear copper A center (CU(A)) of subunit 2 and heme A of subunit 1 to the active site in subunit 1, a binuclear center (BNC) formed by heme A3 and copper B (CU(B)). The BNC reduces molecular oxygen to 2 water molecules using 4 electrons from cytochrome c in the IMS and 4 protons from the mitochondrial matrix. This is Cytochrome c oxidase subunit 7C, mitochondrial (COX7C) from Homo sapiens (Human).